The primary structure comprises 365 residues: tRNA-specific 2-thiouridylase MnmA (365 aa).

ATP-binding positions include 9–16 and Met35; that span reads AMSGGVDS. Catalysis depends on Cys105, which acts as the Nucleophile. Cys105 and Cys203 are oxidised to a cystine. Residue Gly129 coordinates ATP. The segment at 153 to 155 is interaction with tRNA; the sequence is KDQ. Catalysis depends on Cys203, which acts as the Cysteine persulfide intermediate. Positions 308-309 are interaction with tRNA; it reads RY.

It belongs to the MnmA/TRMU family.

The protein resides in the cytoplasm. It carries out the reaction S-sulfanyl-L-cysteinyl-[protein] + uridine(34) in tRNA + AH2 + ATP = 2-thiouridine(34) in tRNA + L-cysteinyl-[protein] + A + AMP + diphosphate + H(+). Its function is as follows. Catalyzes the 2-thiolation of uridine at the wobble position (U34) of tRNA, leading to the formation of s(2)U34. The protein is tRNA-specific 2-thiouridylase MnmA of Pelotomaculum thermopropionicum (strain DSM 13744 / JCM 10971 / SI).